The sequence spans 467 residues: Argininosuccinate lyase (467 aa).

Belongs to the lyase 1 family. Argininosuccinate lyase subfamily.

It localises to the cytoplasm. It catalyses the reaction 2-(N(omega)-L-arginino)succinate = fumarate + L-arginine. Its pathway is amino-acid biosynthesis; L-arginine biosynthesis; L-arginine from L-ornithine and carbamoyl phosphate: step 3/3. The chain is Argininosuccinate lyase from Rhizobium etli (strain ATCC 51251 / DSM 11541 / JCM 21823 / NBRC 15573 / CFN 42).